Reading from the N-terminus, the 428-residue chain is D-amino acid dehydrogenase (428 aa).

FAD is bound at residue 3 to 17; it reads VVVLGSGVVGVTSAY.

It belongs to the DadA oxidoreductase family. FAD serves as cofactor.

The catalysed reaction is a D-alpha-amino acid + A + H2O = a 2-oxocarboxylate + AH2 + NH4(+). It functions in the pathway amino-acid degradation; D-alanine degradation; NH(3) and pyruvate from D-alanine: step 1/1. Its function is as follows. Oxidative deamination of D-amino acids. The sequence is that of D-amino acid dehydrogenase from Paraburkholderia phytofirmans (strain DSM 17436 / LMG 22146 / PsJN) (Burkholderia phytofirmans).